The chain runs to 108 residues: Protein YcgL (108 aa).

The 85-residue stretch at 12–96 folds into the YcgL domain; that stretch reads MFCVIYRSSK…PPEDLLKQHL (85 aa).

This Escherichia coli O9:H4 (strain HS) protein is Protein YcgL.